We begin with the raw amino-acid sequence, 346 residues long: Nitrilase 3 (346 aa).

Position 2 is an N-acetylserine (Ser-2). Residues 25 to 297 (VRVTIVQSST…EGLVTADLDL (273 aa)) enclose the CN hydrolase domain. Catalysis depends on Glu-65, which acts as the Proton acceptor. The active-site Proton donor is Lys-152. Catalysis depends on Cys-186, which acts as the Nucleophile.

Belongs to the carbon-nitrogen hydrolase superfamily. Nitrilase family.

The protein resides in the cell membrane. The catalysed reaction is a nitrile + 2 H2O = a carboxylate + NH4(+). Can convert indole-3-acetonitrile to the plant hormone indole-3-acetic acid. In Arabidopsis thaliana (Mouse-ear cress), this protein is Nitrilase 3 (NIT3).